Reading from the N-terminus, the 485-residue chain is Homospermidine synthase (485 aa).

The protein belongs to the saccharopine dehydrogenase family. NAD(+) serves as cofactor.

The enzyme catalyses 2 putrescine = sym-homospermidine + NH4(+). The catalysed reaction is putrescine + spermidine = sym-homospermidine + propane-1,3-diamine. In terms of biological role, involved in the NAD(+)-dependent synthesis of the polyamine homospermidine from putrescine. The protein is Homospermidine synthase (hss) of Mesorhizobium japonicum (strain LMG 29417 / CECT 9101 / MAFF 303099) (Mesorhizobium loti (strain MAFF 303099)).